A 418-amino-acid polypeptide reads, in one-letter code: Delta(14)-sterol reductase TM7SF2 (418 aa).

Helical transmembrane passes span 13 to 35, 62 to 81, 102 to 124, 129 to 148, 255 to 277, and 287 to 304; these read FGGP…HLLL, ALLL…LLPA, GFQA…LPLG, MLLP…SLFL, FGFM…QAQF, and LPMA…YYIF. NADP(+) is bound by residues K311, R315, L338, W343, and 350–351; that span reads NY. A helical membrane pass occupies residues 355 to 377; it reads LIMALAWSLPCGVSHLLPYFYLL. Residues D390, 394-398, and Y405 each bind NADP(+); that span reads CLQKY.

It belongs to the ERG4/ERG24 family. As to expression, expressed in adult heart, brain, pancreas, lung, liver, skeletal muscle, kidney, ovary, prostate, testis and adrenal gland, but not detected in placenta, spleen, thymus, small intestine, colon (mucosal lining), or peripheral blood leukocytes.

Its subcellular location is the microsome membrane. It localises to the endoplasmic reticulum membrane. The enzyme catalyses 4,4-dimethyl-5alpha-cholesta-8,24-dien-3beta-ol + NADP(+) = 4,4-dimethyl-5alpha-cholesta-8,14,24-trien-3beta-ol + NADPH + H(+). It catalyses the reaction 5alpha-cholest-8,14-dien-3beta-ol + NADPH + H(+) = 5alpha-cholest-8-en-3beta-ol + NADP(+). The catalysed reaction is 4,4-dimethyl-8,14-cholestadien-3beta-ol + NADPH + H(+) = 4,4-dimethyl-5alpha-cholest-8-en-3beta-ol + NADP(+). Its pathway is steroid biosynthesis; cholesterol biosynthesis. Its function is as follows. Catalyzes the reduction of the C14-unsaturated bond of lanosterol, as part of the metabolic pathway leading to cholesterol biosynthesis. The sequence is that of Delta(14)-sterol reductase TM7SF2 (TM7SF2) from Homo sapiens (Human).